Here is a 335-residue protein sequence, read N- to C-terminus: MMVEFAPLNTPLARCLQTAAVLQWVLSFLLLVQVCIGIMVMLVLYNYWFLYIPYLVWFYYDWRTPEQGGRRWNWVQSWPVWKYFKEYFPICLVKTQDLDPGHNYIFGFHPHGIFVPGAFGNFCTKYSDFKKLFPGFTSYLHVAKIWFCFPLFREYLMSNGPVSVSKESLSHVLSKDGGGNVSIIVLGGAKEALEAHPGTFTLCIRQRKGFVKMALTHGASLVPVFSFGENDLYKQINNPKGSWLRTIQDAMYDSMGVALPLIYARGIFQHYFGIMPYRKLIYTVVGRPIPVQQTLNPTSEQIEELHQTYLEELKKLFNEHKGKYGIPEHETLVFK.

The next 2 membrane-spanning stretches (helical) occupy residues 24 to 44 and 104 to 124; these read WVLSFLLLVQVCIGIMVMLVL and YIFGFHPHGIFVPGAFGNFCT. A glycan (N-linked (GlcNAc...) asparagine) is linked at Asn180.

This sequence belongs to the diacylglycerol acyltransferase family. In terms of tissue distribution, expressed at high level in kidney and stomach. Expressed at lower level in brown and white adipose tissue, uterus and liver. Not detected in small intestine.

The protein localises to the endoplasmic reticulum membrane. It carries out the reaction a 2-acylglycerol + an acyl-CoA = a 1,2-diacylglycerol + CoA. The enzyme catalyses 2-(9Z-octadecenoyl)-glycerol + butanoyl-CoA = 1-butanoyl-2-(9Z-octadecenoyl)-glycerol + CoA. It catalyses the reaction 2-(9Z-octadecenoyl)-glycerol + octanoyl-CoA = 1-octanoyl-2-(9Z-octadecenoyl)-glycerol + CoA. The catalysed reaction is 2-(9Z-octadecenoyl)-glycerol + dodecanoyl-CoA = 1-dodecanoyl-2-(9Z-octadecenoyl)-glycerol + CoA. It carries out the reaction 2-(9Z-octadecenoyl)-glycerol + tetradecanoyl-CoA = 1-tetradecanoyl-2-(9Z-octadecenoyl)-glycerol + CoA. The enzyme catalyses 2-(9Z-octadecenoyl)-glycerol + hexadecanoyl-CoA = 1-hexadecanoyl-2-(9Z-octadecenoyl)-glycerol + CoA. It catalyses the reaction 2-(9Z-octadecenoyl)-glycerol + octadecanoyl-CoA = 1-octadecanoyl-2-(9Z-octadecenoyl)-glycerol + CoA. The catalysed reaction is eicosanoyl-CoA + 2-(9Z-octadecenoyl)-glycerol = 1-eicosanoyl-2-(9Z-octadecenoyl)-glycerol + CoA. It carries out the reaction 2-(9Z-octadecenoyl)-glycerol + (9Z)-octadecenoyl-CoA = 1,2-di-(9Z-octadecenoyl)-glycerol + CoA. The enzyme catalyses 2-(9Z-octadecenoyl)-glycerol + (9Z,12Z)-octadecadienoyl-CoA = 1-(9Z,12Z-octadecadienoyl)-2-(9Z-octadecenoyl)-glycerol + CoA. It catalyses the reaction 2-(9Z-octadecenoyl)-glycerol + (5Z,8Z,11Z,14Z)-eicosatetraenoyl-CoA = 1-(5Z,8Z,11Z,14Z-eicosatetraenoyl)-2-(9Z-octadecenoyl)-glycerol + CoA. The catalysed reaction is a 2-acylglycerol + an acyl-CoA = a 1,2-diacyl-sn-glycerol + CoA. It carries out the reaction a 2-acylglycerol + an acyl-CoA = a 2,3-diacyl-sn-glycerol + CoA. The enzyme catalyses a 1-acylglycerol + an acyl-CoA = a 1,2-diacylglycerol + CoA. It catalyses the reaction 1-dodecanoylglycerol + (9Z)-octadecenoyl-CoA = 1-dodecanoyl-2-(9Z-octadecenoyl)-glycerol + CoA. The catalysed reaction is 1-tetradecanoylglycerol + (9Z)-octadecenoyl-CoA = 1-tetradecanoyl-2-(9Z-octadecenoyl)-glycerol + CoA. It carries out the reaction 1-hexadecanoylglycerol + (9Z)-octadecenoyl-CoA = 1-hexadecanoyl-2-(9Z-octadecenoyl)-glycerol + CoA. The enzyme catalyses 1-(9Z-octadecenoyl)-glycerol + (9Z)-octadecenoyl-CoA = 1,2-di-(9Z-octadecenoyl)-glycerol + CoA. It catalyses the reaction 1-(9Z,12Z-octadecadienoyl)-glycerol + (9Z)-octadecenoyl-CoA = 1-(9Z,12Z-octadecadienoyl)-2-(9Z-octadecenoyl)-glycerol + CoA. The catalysed reaction is 1-(9Z,12Z,15Z-octadecatrienoyl)-glycerol + (9Z)-octadecenoyl-CoA = 1-(9Z,12Z,15Z-octadecatrienoyl)-2-(9Z-octadecenoyl)-glycerol + CoA. It carries out the reaction 1-(5Z,8Z,11Z,14Z-eicosatetraenoyl)-glycerol + (9Z)-octadecenoyl-CoA = 1-(5Z,8Z,11Z,14Z-eicosatetraenoyl)-2-(9Z-octadecenoyl)-glycerol + CoA. The enzyme catalyses a 1-acylglycerol + an acyl-CoA = a 1,3-diacylglycerol + CoA. It catalyses the reaction 1-dodecanoylglycerol + (9Z)-octadecenoyl-CoA = 1-dodecanoyl-3-(9Z-octadecenoyl)-glycerol + CoA. The catalysed reaction is 1-hexadecanoylglycerol + (9Z)-octadecenoyl-CoA = 1-(9Z-octadecenoyl)-3-hexadecanoylglycerol + CoA. It carries out the reaction 1-octadecanoylglycerol + (9Z)-octadecenoyl-CoA = 1-octadecanoyl-3-(9Z-octadecenoyl)-glycerol + CoA. The enzyme catalyses 1-(9Z-octadecenoyl)-sn-glycerol + (9Z)-octadecenoyl-CoA = 1,3-di-(9Z-octadecenoyl)-glycerol + CoA. It catalyses the reaction 1-(9Z,12Z-octadecadienoyl)-glycerol + (9Z)-octadecenoyl-CoA = 1-(9Z-octadecenoyl)-3-(9Z,12Z-octadecadienoyl)-glycerol + CoA. The catalysed reaction is 1-(9Z,12Z,15Z-octadecatrienoyl)-glycerol + (9Z)-octadecenoyl-CoA = 1-(9Z,12Z,15Z-octadecatrienoyl)-3-(9Z-octadecenoyl)-glycerol + CoA. It carries out the reaction a 1-acyl-sn-glycerol + an acyl-CoA = a 1,3-diacyl-sn-glycerol + CoA. The enzyme catalyses a 3-acyl-sn-glycerol + an acyl-CoA = a 1,3-diacyl-sn-glycerol + CoA. It catalyses the reaction 3-octadecanoyl-sn-glycerol + (9Z)-octadecenoyl-CoA = 1-(9Z-octadecenoyl)-3-octadecanoyl-sn-glycerol + CoA. Its pathway is glycerolipid metabolism; triacylglycerol biosynthesis. Its function is as follows. Involved in glycerolipid synthesis and lipid metabolism. Catalyzes the formation of diacylglycerol, the precursor of triacylglycerol, by transferring the acyl chain of a fatty acyl-CoA to a monoacylglycerol, mainly at the sn-1 or sn-3 positions. It uses both sn-2-monoacylglycerol (2-acylglycerol) and sn-1-monoacylglycerol (1-acyl-sn-glycerol) equally well as substrates, and uses sn-3-monoacylglycerol (3-acyl-sn-glycerol) with lower efficiency. Probably not involved in absorption of dietary fat in the small intestine. In Mus musculus (Mouse), this protein is 2-acylglycerol O-acyltransferase 1.